A 287-amino-acid chain; its full sequence is Prohibitin-1 (287 aa).

The interaction with ATG8 stretch occupies residues valine 102–tyrosine 116. Residues tyrosine 109–leucine 112 carry the AIM motif. The stretch at glutamate 180–glutamate 224 forms a coiled coil. A disordered region spans residues serine 264–arginine 287. The span at serine 272 to arginine 287 shows a compositional bias: low complexity.

The protein belongs to the prohibitin family. As to quaternary structure, the mitochondrial prohibitin complex consists of two subunits (PHB1 and PHB2). The subunits assemble into a membrane-associated ring-shaped supercomplex of approximately 1 mDa. The mitochondrial prohibitin complex interacts with the m-AAA protease, a heterohexamer composed of YTA12/RCA1 and YTA10/AFG3. The mitochondrial prohibitin complex interacts with ATG8 and the interaction may support mitophagosome assembly. The N-terminus is blocked.

Its subcellular location is the mitochondrion inner membrane. Functionally, prohibitin probably acts as a holdase/unfoldase for the stabilization of newly synthesized mitochondrial proteins. Involved in mitophagy; may act as an adapter for ATG8 that supports mitophagosome assembly. Negatively regulates the proteolytic processing of ATG32 via the i-AAA protease. Acts as a negative regulator of the m-AAA protease. The protein is Prohibitin-1 (PHB1) of Saccharomyces cerevisiae (strain ATCC 204508 / S288c) (Baker's yeast).